The sequence spans 437 residues: CCA-adding enzyme (437 aa).

ATP-binding residues include Ser50 and Lys53. Residues Ser50 and Lys53 each contribute to the CTP site. Positions 61, 63, and 112 each coordinate Mg(2+). ATP-binding residues include His135, Lys155, and Tyr164. The CTP site is built by His135, Lys155, and Tyr164.

Belongs to the tRNA nucleotidyltransferase/poly(A) polymerase family. Archaeal CCA-adding enzyme subfamily. Homodimer. Mg(2+) is required as a cofactor.

The catalysed reaction is a tRNA precursor + 2 CTP + ATP = a tRNA with a 3' CCA end + 3 diphosphate. It catalyses the reaction a tRNA with a 3' CCA end + 2 CTP + ATP = a tRNA with a 3' CCACCA end + 3 diphosphate. Its function is as follows. Catalyzes the addition and repair of the essential 3'-terminal CCA sequence in tRNAs without using a nucleic acid template. Adds these three nucleotides in the order of C, C, and A to the tRNA nucleotide-73, using CTP and ATP as substrates and producing inorganic pyrophosphate. tRNA 3'-terminal CCA addition is required both for tRNA processing and repair. Also involved in tRNA surveillance by mediating tandem CCA addition to generate a CCACCA at the 3' terminus of unstable tRNAs. While stable tRNAs receive only 3'-terminal CCA, unstable tRNAs are marked with CCACCA and rapidly degraded. The polypeptide is CCA-adding enzyme (Thermoplasma volcanium (strain ATCC 51530 / DSM 4299 / JCM 9571 / NBRC 15438 / GSS1)).